We begin with the raw amino-acid sequence, 473 residues long: FAD-dependent oxidoreductase dpasF (473 aa).

A signal peptide spans 1–21 (MNRLLASALLVGSAVVAPVSA). Asn26, Asn54, Asn92, Asn133, Asn185, Asn276, and Asn401 each carry an N-linked (GlcNAc...) asparagine glycan.

It belongs to the beta-cyclopiazonate dehydrogenase family. Requires FAD as cofactor.

It participates in secondary metabolite biosynthesis; terpenoid biosynthesis. FAD-dependent oxidoreductase; part of the gene cluster that mediates the biosynthesis of the diterpenoid pyrones subglutinols A and B. The first step of the pathway is the synthesis of the alpha-pyrone moiety by the polyketide synthase dpasA via condensation of one acetyl-CoA starter unit with 3 malonyl-CoA units and 2 methylations. The alpha-pyrone is then combined with geranylgeranyl pyrophosphate (GGPP) formed by the GGPP synthase dpasD through the action of the prenyltransferase dpasC to yield a linear alpha-pyrone diterpenoid. Subsequent steps in the diterpenoid pyrone biosynthetic pathway involve the decalin core formation, which is initiated by the epoxidation of the C10-C11 olefin by the FAD-dependent oxidoreductase dpasE, and is followed by a cyclization cascade catalyzed by the terpene cyclase dpasB. The FAD-linked oxidoreductase dpasF is then involved in tetrahydrofuran (THF) ring formation at the C5 unit to complete the formation of subglutinols A and B. DpasF possesses also an additional catalytic ability of multi-step oxidations to generate a new DDP analog with an enone system at the C5 named FDDP A. The polypeptide is FAD-dependent oxidoreductase dpasF (Apiospora sacchari (Arthrinium sacchari)).